The sequence spans 71 residues: Brevinin-1E (71 aa).

The first 22 residues, Met1–Cys22, serve as a signal peptide directing secretion. Residues Glu23 to Glu45 constitute a propeptide that is removed on maturation. A disulfide bridge links Cys65 with Cys71.

It belongs to the frog skin active peptide (FSAP) family. Brevinin subfamily. Expressed by the skin glands.

The protein localises to the secreted. In terms of biological role, shows antibacterial activity against representative Gram-negative and Gram-positive bacterial species, and a very high hemolytic activity. This chain is Brevinin-1E, found in Pelophylax lessonae (Pool frog).